A 430-amino-acid polypeptide reads, in one-letter code: Protein POLLENLESS 3-LIKE 2 (430 aa).

Residues 1–21 (MMRDVFRPTKSAPCSPAKPLG) are disordered. TPR repeat units follow at residues 40-73 (DSPYVRAKNVQLVEKDPERAIPLFWKAINAGDRV), 74-107 (DSALKDMAIVMKQQNRAEEAIEAIKSLRVRCSDQ), 110-143 (ESLDNILLDLYKRCGRLDDQIGLLKHKLFLIQKG), 170-203 (TRLLGNLGWALMQRDNFVEAEDAYRRALSIAPDN), 205-236 (KMCNLGICLMKQGRIDEAKETLRRVKPAVVDG), and 238-257 (RGVDSHLKAYERAQQMLNDL). The stretch at 81 to 107 (AIVMKQQNRAEEAIEAIKSLRVRCSDQ) forms a coiled coil. Positions 346 to 376 (KLKRTRSSSQGMGMLSGIGGDHEGETNTSTR) are disordered.

It belongs to the MS5 protein family.

Its subcellular location is the nucleus. Probably involved in the regulation of cell division. The protein is Protein POLLENLESS 3-LIKE 2 of Arabidopsis thaliana (Mouse-ear cress).